Here is a 202-residue protein sequence, read N- to C-terminus: Protein cuti-1 (202 aa).

The Cytoplasmic portion of the chain corresponds to M1–S37. Residues Y38–M58 traverse the membrane as a helical segment. Topologically, residues S59–W68 are extracellular. The chain crosses the membrane as a helical span at residues L69 to F89. Residues G90 to E107 lie on the Cytoplasmic side of the membrane. The chain crosses the membrane as a helical span at residues F108–I128. At Q129–Y148 the chain is on the extracellular side. Residues G149–W169 traverse the membrane as a helical segment. Residues T170 to R202 are Cytoplasmic-facing.

As to quaternary structure, interacts with vps-39.

The protein localises to the cell membrane. Its subcellular location is the cytoplasm. In terms of biological role, involved in cuticle formation and ensures cuticle shedding during larval development. Plays a role in maintaining the hypodermis. In association with vps-39, may play a role in vesicle tethering. This Caenorhabditis elegans protein is Protein cuti-1.